The chain runs to 369 residues: S-(hydroxymethyl)glutathione dehydrogenase (369 aa).

Zn(2+) is bound by residues Cys-40, His-62, Cys-92, Cys-95, Cys-98, Cys-106, and Cys-169.

This sequence belongs to the zinc-containing alcohol dehydrogenase family. Class-III subfamily. As to quaternary structure, homodimer. Zn(2+) is required as a cofactor.

The protein localises to the cytoplasm. It catalyses the reaction S-(hydroxymethyl)glutathione + NADP(+) = S-formylglutathione + NADPH + H(+). The enzyme catalyses S-(hydroxymethyl)glutathione + NAD(+) = S-formylglutathione + NADH + H(+). It carries out the reaction a primary alcohol + NAD(+) = an aldehyde + NADH + H(+). The catalysed reaction is a secondary alcohol + NAD(+) = a ketone + NADH + H(+). It catalyses the reaction S-nitrosoglutathione + NADH + H(+) = S-(hydroxysulfenamide)glutathione + NAD(+). Its function is as follows. Has high formaldehyde dehydrogenase activity in the presence of glutathione and catalyzes the oxidation of normal alcohols in a reaction that is not GSH-dependent. In addition, hemithiolacetals other than those formed from GSH, including omega-thiol fatty acids, also are substrates. Also acts as a S-nitroso-glutathione reductase by catalyzing the NADH-dependent reduction of S-nitrosoglutathione. The polypeptide is S-(hydroxymethyl)glutathione dehydrogenase (frmA) (Photobacterium damsela subsp. piscicida (Pasteurella piscicida)).